A 176-amino-acid polypeptide reads, in one-letter code: RNA pyrophosphohydrolase (176 aa).

In terms of domain architecture, Nudix hydrolase spans 6-149; sequence GYRPNVGIVI…KRDVYRRVMK (144 aa). A Nudix box motif is present at residues 38–59; sequence GGINPGESPEQAMYRELYEEVG.

This sequence belongs to the Nudix hydrolase family. RppH subfamily. The cofactor is a divalent metal cation.

In terms of biological role, accelerates the degradation of transcripts by removing pyrophosphate from the 5'-end of triphosphorylated RNA, leading to a more labile monophosphorylated state that can stimulate subsequent ribonuclease cleavage. The protein is RNA pyrophosphohydrolase of Photorhabdus laumondii subsp. laumondii (strain DSM 15139 / CIP 105565 / TT01) (Photorhabdus luminescens subsp. laumondii).